The chain runs to 103 residues: MNVTLTKAELADLLFERVGLNKREAKDMVEGFFEEIRQALERGECVKLSGFGNFQLRDKPQRPGRNPKTGEEIPITARRVVTFHASQKLKAAVEQLSDASKQP.

This sequence belongs to the bacterial histone-like protein family. Heterodimer of an alpha and a beta chain.

In terms of biological role, this protein is one of the two subunits of integration host factor, a specific DNA-binding protein that functions in genetic recombination as well as in transcriptional and translational control. The chain is Integration host factor subunit alpha from Aromatoleum aromaticum (strain DSM 19018 / LMG 30748 / EbN1) (Azoarcus sp. (strain EbN1)).